The following is a 206-amino-acid chain: Ribosomal RNA large subunit methyltransferase E (206 aa).

The S-adenosyl-L-methionine site is built by glycine 60, tryptophan 62, aspartate 80, aspartate 96, and aspartate 121. Lysine 161 serves as the catalytic Proton acceptor.

The protein belongs to the class I-like SAM-binding methyltransferase superfamily. RNA methyltransferase RlmE family.

It is found in the cytoplasm. It carries out the reaction uridine(2552) in 23S rRNA + S-adenosyl-L-methionine = 2'-O-methyluridine(2552) in 23S rRNA + S-adenosyl-L-homocysteine + H(+). Its function is as follows. Specifically methylates the uridine in position 2552 of 23S rRNA at the 2'-O position of the ribose in the fully assembled 50S ribosomal subunit. This Nitrosomonas eutropha (strain DSM 101675 / C91 / Nm57) protein is Ribosomal RNA large subunit methyltransferase E.